The primary structure comprises 849 residues: Protein translocase subunit SecA (849 aa).

ATP-binding positions include Q85, 103–107 (GEGKT), and D493. 4 residues coordinate Zn(2+): C832, C834, C843, and H844.

Belongs to the SecA family. As to quaternary structure, monomer and homodimer. Part of the essential Sec protein translocation apparatus which comprises SecA, SecYEG and auxiliary proteins SecDF. Other proteins may also be involved. Zn(2+) serves as cofactor.

The protein resides in the cell membrane. Its subcellular location is the cytoplasm. The enzyme catalyses ATP + H2O + cellular proteinSide 1 = ADP + phosphate + cellular proteinSide 2.. Functionally, part of the Sec protein translocase complex. Interacts with the SecYEG preprotein conducting channel. Has a central role in coupling the hydrolysis of ATP to the transfer of proteins into and across the cell membrane, serving as an ATP-driven molecular motor driving the stepwise translocation of polypeptide chains across the membrane. The protein is Protein translocase subunit SecA of Streptococcus thermophilus (strain ATCC BAA-491 / LMD-9).